The primary structure comprises 608 residues: UvrABC system protein C (608 aa).

Residues 16–94 form the GIY-YIG domain; sequence NRPGVYRMFD…IKEWRPPYNI (79 aa). A UVR domain is found at 204-239; sequence NALADELNTGMEQAAMRLDFEKAAELRDQVAILRRV.

It belongs to the UvrC family. In terms of assembly, interacts with UvrB in an incision complex.

It localises to the cytoplasm. Its function is as follows. The UvrABC repair system catalyzes the recognition and processing of DNA lesions. UvrC both incises the 5' and 3' sides of the lesion. The N-terminal half is responsible for the 3' incision and the C-terminal half is responsible for the 5' incision. This chain is UvrABC system protein C, found in Pseudomonas paraeruginosa (strain DSM 24068 / PA7) (Pseudomonas aeruginosa (strain PA7)).